The chain runs to 356 residues: Arginine kinase Lit v 2 (356 aa).

A Phosphagen kinase N-terminal domain is found at 9-91 (KLEAGFKKLE…FDPIIEDYHV (83 aa)). Residue 64-68 (GVGIY) participates in L-arginine binding. In terms of domain architecture, Phosphagen kinase C-terminal spans 119 to 356 (FVISTRVRCG…LELIKMEKEM (238 aa)). ATP contacts are provided by residues 122 to 126 (STRVR) and His-185. Glu-225 is an L-arginine binding site. Arg-229 is a binding site for ATP. Position 271 (Cys-271) interacts with L-arginine. ATP contacts are provided by residues 280 to 284 (RASVH) and 309 to 314 (RGTRGE). Residue Glu-314 participates in L-arginine binding.

Belongs to the ATP:guanido phosphotransferase family. Expressed in muscle (at protein level). Expressed in muscle, heart, nerve, stomach and hemocytes, with the highest expression in muscle. Very low expression in eyestalk and intestine. Not expressed in hepatopancreas, gill and skin.

The enzyme catalyses L-arginine + ATP = N(omega)-phospho-L-arginine + ADP + H(+). With respect to regulation, no change in activity after supplementation with 10 mM glucose. However, activity decreases significantly when glucose concentration is higher than 50 mM and almost all activity is lost with 200 mM glucose. Activity is significantly increased after treatment with 10 mM and 50 mM ATP. However, activity drops significantly with 200 mM ATP. Inhibited by 10-200 mM alpha-ketoglutarate. No change in activity after incubation with 10-200 mM L-citrulline, L-ornaline or glycerol. Functionally, catalyzes the reversible transfer of high energy ATP gamma-phosphate group to L-arginine. This Penaeus vannamei (Whiteleg shrimp) protein is Arginine kinase Lit v 2.